We begin with the raw amino-acid sequence, 286 residues long: Bifunctional protein FolD (286 aa).

NADP(+) contacts are provided by residues 166–168 and isoleucine 232; that span reads GAS.

The protein belongs to the tetrahydrofolate dehydrogenase/cyclohydrolase family. As to quaternary structure, homodimer.

The enzyme catalyses (6R)-5,10-methylene-5,6,7,8-tetrahydrofolate + NADP(+) = (6R)-5,10-methenyltetrahydrofolate + NADPH. It catalyses the reaction (6R)-5,10-methenyltetrahydrofolate + H2O = (6R)-10-formyltetrahydrofolate + H(+). Its pathway is one-carbon metabolism; tetrahydrofolate interconversion. In terms of biological role, catalyzes the oxidation of 5,10-methylenetetrahydrofolate to 5,10-methenyltetrahydrofolate and then the hydrolysis of 5,10-methenyltetrahydrofolate to 10-formyltetrahydrofolate. The sequence is that of Bifunctional protein FolD from Vibrio parahaemolyticus serotype O3:K6 (strain RIMD 2210633).